Reading from the N-terminus, the 356-residue chain is Cytochrome c oxidase subunit 2 (356 aa).

The signal sequence occupies residues 1-23 (MNKGLCNWRLFSLFGMMALLLAG). The interval 24 to 259 (CGKPFLSTLQ…QNAKKPVVTD (236 aa)) is cytochrome c oxidase subunit II. The next 2 membrane-spanning stretches (helical) occupy residues 45 to 65 (LMLL…IIFV) and 93 to 113 (IIWT…TVLT). Residues His178, Cys219, Cys223, and His227 each coordinate Cu cation. The Cytochrome c domain maps to 260–356 (PVAKEGEAIF…TKYLMSLKVE (97 aa)). Positions 273, 276, 277, and 331 each coordinate heme c.

Belongs to the cytochrome c oxidase subunit 2 family. Cu cation is required as a cofactor. The cofactor is heme c.

Its subcellular location is the cell membrane. It catalyses the reaction 4 Fe(II)-[cytochrome c] + O2 + 8 H(+)(in) = 4 Fe(III)-[cytochrome c] + 2 H2O + 4 H(+)(out). In terms of biological role, subunits I and II form the functional core of the enzyme complex. Electrons originating in cytochrome c are transferred via heme a and Cu(A) to the binuclear center formed by heme a3 and Cu(B). The chain is Cytochrome c oxidase subunit 2 (ctaC) from Bacillus sp. (strain PS3).